The primary structure comprises 285 residues: Diaminopimelate epimerase (285 aa).

Substrate is bound by residues Asn15 and Asn68. The active-site Proton donor is Cys77. Residues 78 to 79 (GN), Asn165, Asn201, and 219 to 220 (ER) each bind substrate. Cys228 acts as the Proton acceptor in catalysis. 229–230 (GT) lines the substrate pocket.

It belongs to the diaminopimelate epimerase family. Homodimer.

It localises to the cytoplasm. The enzyme catalyses (2S,6S)-2,6-diaminopimelate = meso-2,6-diaminopimelate. The protein operates within amino-acid biosynthesis; L-lysine biosynthesis via DAP pathway; DL-2,6-diaminopimelate from LL-2,6-diaminopimelate: step 1/1. In terms of biological role, catalyzes the stereoinversion of LL-2,6-diaminopimelate (L,L-DAP) to meso-diaminopimelate (meso-DAP), a precursor of L-lysine and an essential component of the bacterial peptidoglycan. This Synechococcus sp. (strain JA-3-3Ab) (Cyanobacteria bacterium Yellowstone A-Prime) protein is Diaminopimelate epimerase.